The sequence spans 88 residues: Small ribosomal subunit protein uS17 (88 aa).

This sequence belongs to the universal ribosomal protein uS17 family. In terms of assembly, part of the 30S ribosomal subunit.

One of the primary rRNA binding proteins, it binds specifically to the 5'-end of 16S ribosomal RNA. The sequence is that of Small ribosomal subunit protein uS17 from Mycoplasmopsis pulmonis (strain UAB CTIP) (Mycoplasma pulmonis).